Reading from the N-terminus, the 272-residue chain is Formamidopyrimidine-DNA glycosylase (272 aa).

The Schiff-base intermediate with DNA role is filled by Pro-2. Glu-3 (proton donor) is an active-site residue. Lys-56 functions as the Proton donor; for beta-elimination activity in the catalytic mechanism. 3 residues coordinate DNA: His-89, Arg-108, and Lys-149. Residues 234–268 (LAYGRAGEMCVNCETPLENLKLGQRASVFCPQCQP) form an FPG-type zinc finger. Arg-258 serves as the catalytic Proton donor; for delta-elimination activity.

The protein belongs to the FPG family. Monomer. The cofactor is Zn(2+).

It catalyses the reaction Hydrolysis of DNA containing ring-opened 7-methylguanine residues, releasing 2,6-diamino-4-hydroxy-5-(N-methyl)formamidopyrimidine.. The enzyme catalyses 2'-deoxyribonucleotide-(2'-deoxyribose 5'-phosphate)-2'-deoxyribonucleotide-DNA = a 3'-end 2'-deoxyribonucleotide-(2,3-dehydro-2,3-deoxyribose 5'-phosphate)-DNA + a 5'-end 5'-phospho-2'-deoxyribonucleoside-DNA + H(+). Functionally, involved in base excision repair of DNA damaged by oxidation or by mutagenic agents. Acts as a DNA glycosylase that recognizes and removes damaged bases. Has a preference for oxidized purines, such as 7,8-dihydro-8-oxoguanine (8-oxoG). Has AP (apurinic/apyrimidinic) lyase activity and introduces nicks in the DNA strand. Cleaves the DNA backbone by beta-delta elimination to generate a single-strand break at the site of the removed base with both 3'- and 5'-phosphates. The chain is Formamidopyrimidine-DNA glycosylase from Acinetobacter baylyi (strain ATCC 33305 / BD413 / ADP1).